Consider the following 416-residue polypeptide: Ribulose bisphosphate carboxylase large chain (416 aa).

2 residues coordinate substrate: asparagine 100 and threonine 150. Lysine 152 acts as the Proton acceptor in catalysis. Residue lysine 154 coordinates substrate. Residues lysine 178, aspartate 180, and glutamate 181 each coordinate Mg(2+). The residue at position 178 (lysine 178) is an N6-carboxylysine. Residue histidine 271 is the Proton acceptor of the active site. Substrate is bound by residues arginine 272, histidine 304, and serine 356.

It belongs to the RuBisCO large chain family. Type I subfamily. In terms of assembly, heterohexadecamer of 8 large chains and 8 small chains; disulfide-linked. The disulfide link is formed within the large subunit homodimers. Requires Mg(2+) as cofactor. The disulfide bond which can form in the large chain dimeric partners within the hexadecamer appears to be associated with oxidative stress and protein turnover.

The protein localises to the plastid. The protein resides in the chloroplast. The enzyme catalyses 2 (2R)-3-phosphoglycerate + 2 H(+) = D-ribulose 1,5-bisphosphate + CO2 + H2O. It carries out the reaction D-ribulose 1,5-bisphosphate + O2 = 2-phosphoglycolate + (2R)-3-phosphoglycerate + 2 H(+). Its function is as follows. RuBisCO catalyzes two reactions: the carboxylation of D-ribulose 1,5-bisphosphate, the primary event in carbon dioxide fixation, as well as the oxidative fragmentation of the pentose substrate in the photorespiration process. Both reactions occur simultaneously and in competition at the same active site. The protein is Ribulose bisphosphate carboxylase large chain (rbcL) of Cheiropleuria bicuspis (Fern).